Consider the following 269-residue polypeptide: Peptide deformylase 1A, chloroplastic/mitochondrial (269 aa).

Residues 1-60 (MGLHRDEATAMETLFRVSLRLLPVSAAVTCRSIRFPVSRPGSSHLLNRKLYNLPTSSSSS) constitute a chloroplast and mitochondrion transit peptide. Substrate contacts are provided by residues 123–126 (PGVG) and glycine 187. Zn(2+) is bound at residue cysteine 188. Residues 191 to 196 (VDGFRA) are dimerization. Position 230 (histidine 230) interacts with Zn(2+). Glutamate 231 is a catalytic residue. Zn(2+) is bound at residue histidine 234. The dimerization stretch occupies residues 236–254 (DGNLYVDKMVPRTFRTVDN).

The protein belongs to the polypeptide deformylase family. In terms of assembly, homodimer. The cofactor is Zn(2+). In terms of tissue distribution, expressed in roots, leaves, flowers and siliques.

The protein resides in the plastid. It is found in the chloroplast stroma. Its subcellular location is the mitochondrion. It carries out the reaction N-terminal N-formyl-L-methionyl-[peptide] + H2O = N-terminal L-methionyl-[peptide] + formate. With respect to regulation, inhibited by actinonin. Functionally, removes the formyl group from the N-terminal Met of newly synthesized proteins. The chain is Peptide deformylase 1A, chloroplastic/mitochondrial (PDF1A) from Arabidopsis thaliana (Mouse-ear cress).